Reading from the N-terminus, the 179-residue chain is Large ribosomal subunit protein uL5 (179 aa).

It belongs to the universal ribosomal protein uL5 family. In terms of assembly, part of the 50S ribosomal subunit; part of the 5S rRNA/L5/L18/L25 subcomplex. Contacts the 5S rRNA and the P site tRNA. Forms a bridge to the 30S subunit in the 70S ribosome.

This is one of the proteins that bind and probably mediate the attachment of the 5S RNA into the large ribosomal subunit, where it forms part of the central protuberance. In the 70S ribosome it contacts protein S13 of the 30S subunit (bridge B1b), connecting the 2 subunits; this bridge is implicated in subunit movement. Contacts the P site tRNA; the 5S rRNA and some of its associated proteins might help stabilize positioning of ribosome-bound tRNAs. The sequence is that of Large ribosomal subunit protein uL5 from Staphylococcus carnosus (strain TM300).